We begin with the raw amino-acid sequence, 321 residues long: Necdin (321 aa).

The segment at 1–96 (MSEQSKDLSD…QPGPAPPAPA (96 aa)) is disordered. Positions 20–35 (SEVHSSPGVSEGVPPS) are enriched in low complexity. Residues 98-297 (LVQKAHELMW…QAWPSRYREA (200 aa)) enclose the MAGE domain.

In terms of assembly, binds to the transactivation domains of E2F1 and p53. Binds also SV40 large T antigen and adenovirus E1A. Interacts with nucleobindin 1 and 2. As to expression, almost ubiquitous. Detected in fetal brain, lung, liver and kidney; in adult heart, brain, placenta, lung, liver, skeletal muscle, kidney, pancreas, spleen, thymus, prostate, testis, ovary, small intestine and colon. Not detected in peripheral blood leukocytes. In brain, restricted to post-mitotic neurons.

The protein localises to the perikaryon. Its subcellular location is the nucleus. Its function is as follows. Growth suppressor that facilitates the entry of the cell into cell cycle arrest. Functionally similar to the retinoblastoma protein it binds to and represses the activity of cell-cycle-promoting proteins such as SV40 large T antigen, adenovirus E1A, and the transcription factor E2F. Necdin also interacts with p53 and works in an additive manner to inhibit cell growth. Also functions as a transcription factor and directly binds to specific guanosine-rich DNA sequences. This chain is Necdin (NDN), found in Homo sapiens (Human).